Reading from the N-terminus, the 113-residue chain is ATP-dependent Clp protease adapter protein ClpS (113 aa).

Positions 1–11 (MHRDLHMMSDR) are enriched in basic and acidic residues. Positions 1–25 (MHRDLHMMSDRSEDDGDTSILTATK) are disordered.

This sequence belongs to the ClpS family. In terms of assembly, binds to the N-terminal domain of the chaperone ClpA.

Involved in the modulation of the specificity of the ClpAP-mediated ATP-dependent protein degradation. In Roseobacter denitrificans (strain ATCC 33942 / OCh 114) (Erythrobacter sp. (strain OCh 114)), this protein is ATP-dependent Clp protease adapter protein ClpS.